Here is a 208-residue protein sequence, read N- to C-terminus: Imidazoleglycerol-phosphate dehydratase (208 aa).

It belongs to the imidazoleglycerol-phosphate dehydratase family.

It localises to the cytoplasm. It carries out the reaction D-erythro-1-(imidazol-4-yl)glycerol 3-phosphate = 3-(imidazol-4-yl)-2-oxopropyl phosphate + H2O. Its pathway is amino-acid biosynthesis; L-histidine biosynthesis; L-histidine from 5-phospho-alpha-D-ribose 1-diphosphate: step 6/9. This Symbiobacterium thermophilum (strain DSM 24528 / JCM 14929 / IAM 14863 / T) protein is Imidazoleglycerol-phosphate dehydratase.